The chain runs to 662 residues: Probable conjugal transfer protein TrbE part 2 (662 aa).

307 to 314 (GPTGSGKS) lines the ATP pocket.

This sequence belongs to the TrbE/VirB4 family.

This is Probable conjugal transfer protein TrbE part 2 (trbEB) from Sinorhizobium fredii (strain NBRC 101917 / NGR234).